Consider the following 900-residue polypeptide: Iodate reductase subunit IdrA (900 aa).

The disordered stretch occupies residues 1–21 (MSENIKQGGAGTFMQAPQDSV). 3 residues coordinate [3Fe-4S] cluster: Cys35, Cys38, and Cys42.

It belongs to the prokaryotic molybdopterin-containing oxidoreductase family. As to quaternary structure, the iodate reductase (Idr) complex is composed of a molybdopterin-dependent iodate reductase (IdrA and IdrB subunits) and two associated peroxidases (IdrP1 and IdrP2). [3Fe-4S] cluster serves as cofactor. Mo-bis(molybdopterin guanine dinucleotide) is required as a cofactor.

Its subcellular location is the periplasm. In terms of biological role, involved in iodate respiration. May accept electrons from cytochrome c551, and catalyze the reduction of iodate (IO(3)(-)) to produce the chemically unstable intermediate hypoiodous acid (HIO). This intermediate then undergoes abiotic disproportionation to yield two molecules of iodide (I(-)) and one molecule of iodate. The resultant iodate subsequently cycles back into the reductive pathway. The initial reduction of iodate may inadvertently produce low levels of incidental toxic H(2)O(2), which is detoxified by IdrP1 and IdrP2. This Denitromonas iodatirespirans protein is Iodate reductase subunit IdrA.